A 76-amino-acid chain; its full sequence is UPF0235 protein MRA_1997 (76 aa).

It belongs to the UPF0235 family.

The sequence is that of UPF0235 protein MRA_1997 from Mycobacterium tuberculosis (strain ATCC 25177 / H37Ra).